The following is a 470-amino-acid chain: Mitogen-activated protein kinase 15 (470 aa).

A Protein kinase domain is found at 13–306; sequence FDLQKRLGKG…VEQCLVHPYV (294 aa). Residues 19-27 and lysine 42 each bind ATP; that span reads LGKGAYGIV. The active-site Proton acceptor is the aspartate 137. Threonine 178 carries the phosphothreonine modification. The short motif at 178 to 180 is the TXY element; that stretch reads TEY. Phosphotyrosine is present on tyrosine 180. The tract at residues 362 to 445 is disordered; the sequence is PYGEDKSRAP…PSSIKQRRRS (84 aa). The segment covering 394 to 406 has biased composition (low complexity); sequence MDKNNSSSHDSSS. Residues 409 to 426 show a composition bias toward basic and acidic residues; that stretch reads LRERAASAESRTSKDSNG.

The protein belongs to the protein kinase superfamily. CMGC Ser/Thr protein kinase family. MAP kinase subfamily. Mg(2+) is required as a cofactor. In terms of processing, dually phosphorylated on Thr-178 and Tyr-180, which activates the enzyme. In terms of tissue distribution, expressed in the URX neuron and in many other head sensory neurons. Isoform a: Expressed in head and tail ciliated sensory neurons, and in mid-body neurons. Isoform c: Expressed in head and tail ciliated sensory neurons, and in mid-body neurons.

It localises to the cell projection. Its subcellular location is the cilium. The protein resides in the cilium membrane. The protein localises to the cytoplasm. It is found in the cytoskeleton. It localises to the cilium axoneme. Its subcellular location is the cilium basal body. The protein resides in the cell junction. The protein localises to the perikaryon. It is found in the dendrite. The enzyme catalyses L-seryl-[protein] + ATP = O-phospho-L-seryl-[protein] + ADP + H(+). It catalyses the reaction L-threonyl-[protein] + ATP = O-phospho-L-threonyl-[protein] + ADP + H(+). Its activity is regulated as follows. Activated by threonine and tyrosine phosphorylation. In terms of biological role, atypical MAPK protein. Regulates primary cilium formation in sensory neurons and the localization of ciliary proteins involved in cilium structure, transport, and signaling. Acts in dopamine (DA) neurons to support synaptic membrane dat-1 availability via activation of rho-1 thereby sustaining normal levels of DA clearance. Plays a role in male mating behavior, probably in part through regulating the localization of the polycystin pkd-2. Functions postembryonically in the URX sensory neurons to constrain URX dendrite growth throughout lifetime, probably by restricting expansion of the subcellular sensory compartment at the dendrite ending. The protein is Mitogen-activated protein kinase 15 of Caenorhabditis elegans.